Reading from the N-terminus, the 526-residue chain is Peptide chain release factor 3 (526 aa).

The tr-type G domain maps to 9 to 277; sequence DKRRTFAIIS…GIVEWAPIPQ (269 aa). GTP is bound by residues 18-25, 86-90, and 140-143; these read SHPDAGKT, DTPGH, and NKLD.

This sequence belongs to the TRAFAC class translation factor GTPase superfamily. Classic translation factor GTPase family. PrfC subfamily.

Its subcellular location is the cytoplasm. Functionally, increases the formation of ribosomal termination complexes and stimulates activities of RF-1 and RF-2. It binds guanine nucleotides and has strong preference for UGA stop codons. It may interact directly with the ribosome. The stimulation of RF-1 and RF-2 is significantly reduced by GTP and GDP, but not by GMP. The sequence is that of Peptide chain release factor 3 from Shewanella halifaxensis (strain HAW-EB4).